The sequence spans 133 residues: NVKAVWEHVKGHEEVYGAEALYRAFLCDPQTQTYFAGKDLSENSAFLHSHGKKVMCALTNAIAHIDDIDGCMSKLSDKHAHELMVDPGNFDILAHHILTVLAMFLSQLLTCANHRSVDKFLSCVKNVLTSRYR.

Positions 1–133 constitute a Globin domain; it reads NVKAVWEHVK…VKNVLTSRYR (133 aa). An O2-binding site is contributed by H50. Residue H79 participates in heme b binding.

The protein belongs to the globin family. As to quaternary structure, minor hemoglobin is a heterotetramer of two alpha-2 chains and two beta-2 chains. As to expression, red blood cells.

Involved in oxygen transport from the lung to the various peripheral tissues. This chain is Hemoglobin subunit alpha-2, found in Pleurodeles waltl (Iberian ribbed newt).